The primary structure comprises 442 residues: Magnesium transporter MRS2-1 (442 aa).

A disordered region spans residues 1 to 30; it reads MSELKERLLPPRPASAMNLRDASVTRPSAS. 2 helical membrane-spanning segments follow: residues 378 to 398 and 414 to 434; these read LLLT…GIFG and WVLI…VWFF. Positions 398-400 match the Required for magnesium transport activity motif; sequence GMN.

The protein belongs to the CorA metal ion transporter (MIT) (TC 1.A.35.5) family. Expressed in the whole plant except stems.

It is found in the membrane. Magnesium transporter that may mediate the influx of magnesium. In Arabidopsis thaliana (Mouse-ear cress), this protein is Magnesium transporter MRS2-1 (MRS2-1).